The primary structure comprises 338 residues: L-lysine 2,3-aminomutase (338 aa).

The Radical SAM core domain maps to 107-330 (HKYRNRLLFM…PKLAREIAGE (224 aa)). Residues C121, C125, and C128 each contribute to the [4Fe-4S] cluster site. An N6-(pyridoxal phosphate)lysine modification is found at K333.

The protein belongs to the radical SAM superfamily. KamA family. Requires [4Fe-4S] cluster as cofactor. Pyridoxal 5'-phosphate serves as cofactor.

The catalysed reaction is L-lysine = D-beta-lysine. With EpmA is involved in the beta-lysylation step of the post-translational modification of translation elongation factor P (EF-P) on 'Lys-34'. EpmB appears to act before EpmA. Displays lysine 2,3-aminomutase activity, producing (R)-beta-lysine from (S)-alpha-lysine (L-lysine). The protein is L-lysine 2,3-aminomutase (epmB) of Haemophilus influenzae (strain ATCC 51907 / DSM 11121 / KW20 / Rd).